Reading from the N-terminus, the 94-residue chain is DNA-directed RNA polymerase subunit omega (94 aa).

It belongs to the RNA polymerase subunit omega family. As to quaternary structure, the RNAP catalytic core consists of 2 alpha, 1 beta, 1 beta' and 1 omega subunit. When a sigma factor is associated with the core the holoenzyme is formed, which can initiate transcription.

The enzyme catalyses RNA(n) + a ribonucleoside 5'-triphosphate = RNA(n+1) + diphosphate. In terms of biological role, promotes RNA polymerase assembly. Latches the N- and C-terminal regions of the beta' subunit thereby facilitating its interaction with the beta and alpha subunits. This chain is DNA-directed RNA polymerase subunit omega, found in Frankia casuarinae (strain DSM 45818 / CECT 9043 / HFP020203 / CcI3).